An 80-amino-acid chain; its full sequence is Polcalcin Cyn d 7 (80 aa).

EF-hand domains follow at residues 2–37 and 40–72; these read ADTGDMEHIFKRFDTNGDGKISLAELTDALRTLGST and DEVQRMMAEIDTDGDGFIDFDEFISFCNANPGL. Ca(2+) is bound by residues Asp15, Asn17, Asp19, Lys21, Glu26, Asp50, Asp52, Asp54, and Glu61.

This Cynodon dactylon (Bermuda grass) protein is Polcalcin Cyn d 7.